A 344-amino-acid polypeptide reads, in one-letter code: Melanocyte-stimulating hormone receptor (344 aa).

The Extracellular portion of the chain corresponds to Met-1–Glu-37. N-linked (GlcNAc...) asparagine glycosylation is present at Asn-29. The helical transmembrane segment at Val-38 to Ile-63 threads the bilayer. Residues Ala-64–Ser-72 are Cytoplasmic-facing. A helical transmembrane segment spans residues Met-73–Leu-93. The Extracellular segment spans residues Glu-94 to Asn-118. Residues Thr-119–Val-140 traverse the membrane as a helical segment. Residues Asp-141 to Arg-163 lie on the Cytoplasmic side of the membrane. The helical transmembrane segment at Ala-164–Tyr-183 threads the bilayer. The Extracellular portion of the chain corresponds to Asp-184–Cys-191. The helical transmembrane segment at Leu-192–Leu-211 threads the bilayer. Residues Ala-212 to Ala-240 lie on the Cytoplasmic side of the membrane. A helical transmembrane segment spans residues Ala-241–Phe-266. At Cys-267 to Asn-279 the chain is on the extracellular side. The chain crosses the membrane as a helical span at residues Phe-280–Phe-300. Topologically, residues Arg-301–Pro-344 are cytoplasmic. Residue Cys-315 is the site of S-palmitoyl cysteine attachment.

Belongs to the G-protein coupled receptor 1 family. In terms of assembly, interacts with MGRN1, but does not undergo MGRN1-mediated ubiquitination; this interaction competes with GNAS-binding and thus inhibits agonist-induced cAMP production. Interacts with OPN3; the interaction results in a decrease in MC1R-mediated cAMP signaling and ultimately a decrease in melanin production in melanocytes.

Its subcellular location is the cell membrane. In terms of biological role, receptor for MSH (alpha, beta and gamma) and ACTH. The activity of this receptor is mediated by G proteins which activate adenylate cyclase. Mediates melanogenesis, the production of eumelanin (black/brown) and phaeomelanin (red/yellow), via regulation of cAMP signaling in melanocytes. The sequence is that of Melanocyte-stimulating hormone receptor (MC1R) from Callithrix geoffroyi (Geoffroy's marmoset).